Here is a 311-residue protein sequence, read N- to C-terminus: tRNA dimethylallyltransferase (311 aa).

ATP is bound at residue 9 to 16 (GPTAVGKT). Residue 11–16 (TAVGKT) participates in substrate binding. The interval 34–37 (DSMQ) is interaction with substrate tRNA.

It belongs to the IPP transferase family. In terms of assembly, monomer. Mg(2+) serves as cofactor.

The enzyme catalyses adenosine(37) in tRNA + dimethylallyl diphosphate = N(6)-dimethylallyladenosine(37) in tRNA + diphosphate. Its function is as follows. Catalyzes the transfer of a dimethylallyl group onto the adenine at position 37 in tRNAs that read codons beginning with uridine, leading to the formation of N6-(dimethylallyl)adenosine (i(6)A). The chain is tRNA dimethylallyltransferase from Clostridium botulinum (strain Langeland / NCTC 10281 / Type F).